Reading from the N-terminus, the 664-residue chain is Ubiquinol oxidase subunit 1 (664 aa).

2 consecutive transmembrane segments (helical) span residues 15-35 (PILV…LGLI) and 57-77 (LAAM…ADAI). His-106 provides a ligand contact to heme b. A run of 12 helical transmembrane segments spans residues 109 to 129 (IMIF…IVPL), 136 to 156 (VAFP…FILV), 190 to 210 (YIWA…NFFV), 233 to 253 (LCAS…VGLL), 278 to 298 (LIWA…FGVF), 316 to 336 (MVYA…HHFF), 347 to 367 (FFGI…FNWL), 383 to 403 (WAVG…MLAI), 414 to 434 (LFLI…GYIC), 456 to 476 (AFWF…IVGF), 490 to 510 (AWHP…LGIA), and 603 to 623 (ALIF…VGLV). 4 residues coordinate Cu cation: His-284, Tyr-288, His-333, and His-334. The segment at residues 284–288 (HPEVY) is a cross-link (1'-histidyl-3'-tyrosine (His-Tyr)). Residue His-419 participates in Fe(II)-heme a binding. His-421 lines the heme b pocket.

Belongs to the heme-copper respiratory oxidase family. As to quaternary structure, heterotetramer of the subunits 1, 2, 3 and 4.

The protein localises to the cell membrane. Catalytic subunit of the enzyme. Electrons originating in a quinol are transferred to the bimetallic center formed by heme a and copper B. The polypeptide is Ubiquinol oxidase subunit 1 (cyaA) (Acetobacter aceti).